We begin with the raw amino-acid sequence, 736 residues long: Peroxisomal multifunctional enzyme type 2 (736 aa).

Positions 1 to 305 (MGSPLRFDGR…IEVLSKIDSE (305 aa)) are (3R)-hydroxyacyl-CoA dehydrogenase. NAD(+)-binding positions include 13–37 (LVTG…ALVV), Leu21, and Asp40. Lys46 is subject to N6-acetyllysine; alternate. Position 46 is an N6-succinyllysine; alternate (Lys46). Ser52 bears the Phosphoserine mark. 2 positions are modified to N6-succinyllysine: Lys57 and Lys68. Residue 75–76 (SV) coordinates NAD(+). N6-succinyllysine is present on Lys84. Asn99 lines the NAD(+) pocket. Ser151 lines the substrate pocket. The active-site Proton acceptor is the Tyr164. NAD(+) is bound by residues 164–168 (YSAAK) and 196–199 (AGSR). Thr265 bears the Phosphothreonine mark. Lys275 bears the N6-succinyllysine mark. Ser304 and Ser309 each carry phosphoserine. The interval 322–622 (SGFAGAIGQK…AKTPSEGGKL (301 aa)) is enoyl-CoA hydratase 2. Lys356 is modified (N6-succinyllysine). A (3R)-3-hydroxydecanoyl-CoA-binding site is contributed by 406–407 (HG). Lys424 carries the N6-succinyllysine modification. (3R)-3-hydroxydecanoyl-CoA is bound by residues Lys435, 510–515 (DWNPLH), Gly533, and Phe563. Residues 484 to 600 (IPNRPPDAVL…QETGDIVISN (117 aa)) form the MaoC-like domain. Lys565 bears the N6-acetyllysine mark. N6-succinyllysine occurs at positions 579 and 663. Positions 624 to 736 (STFVFEEIGR…QMILKDYAKL (113 aa)) constitute an SCP2 domain. Lys669 carries the post-translational modification N6-acetyllysine. Gln706 is a binding site for substrate. An N6-acetyllysine modification is found at Lys707. Gln724 is a binding site for substrate. At Lys725 the chain carries N6-succinyllysine. The Microbody targeting signal motif lies at 734-736 (AKL).

Belongs to the short-chain dehydrogenases/reductases (SDR) family. In terms of assembly, homodimer. Present in many tissues with highest concentrations in liver, heart, prostate and testis.

Its subcellular location is the peroxisome. It carries out the reaction a (3R)-3-hydroxyacyl-CoA + NAD(+) = a 3-oxoacyl-CoA + NADH + H(+). It catalyses the reaction a (3R)-3-hydroxyacyl-CoA = a (2E)-enoyl-CoA + H2O. The enzyme catalyses (24R,25R)-3alpha,7alpha,12alpha,24-tetrahydroxy-5beta-cholestan-26-oyl-CoA = (24E)-3alpha,7alpha,12alpha-trihydroxy-5beta-cholest-24-en-26-oyl-CoA + H2O. The catalysed reaction is (2E)-octenoyl-CoA + H2O = (3R)-hydroxyoctanoyl-CoA. It carries out the reaction (3R)-hydroxyoctanoyl-CoA + NAD(+) = 3-oxooctanoyl-CoA + NADH + H(+). It catalyses the reaction (3R)-hydroxyhexadecanoyl-CoA + NAD(+) = 3-oxohexadecanoyl-CoA + NADH + H(+). The enzyme catalyses (2E)-hexadecenedioyl-CoA + H2O = (3R)-hydroxyhexadecanedioyl-CoA. The catalysed reaction is (3R)-hydroxyhexadecanedioyl-CoA + NAD(+) = 3-oxohexadecanedioyl-CoA + NADH + H(+). It carries out the reaction (3R)-hydroxyhexadecanoyl-CoA = (2E)-hexadecenoyl-CoA + H2O. It catalyses the reaction (3R)-3-hydroxydecanoyl-CoA = (2E)-decenoyl-CoA + H2O. The enzyme catalyses (3R)-3-hydroxydecanoyl-CoA + NAD(+) = 3-oxodecanoyl-CoA + NADH + H(+). The catalysed reaction is (24R,25R)-3alpha,7alpha,12alpha,24-tetrahydroxy-5beta-cholestan-26-oyl-CoA + NAD(+) = 3alpha,7alpha,12alpha-trihydroxy-24-oxo-5beta-cholestan-26-oyl-CoA + NADH + H(+). Its pathway is lipid metabolism; fatty acid beta-oxidation. Functionally, bifunctional enzyme acting on the peroxisomal fatty acid beta-oxidation pathway. Catalyzes two of the four reactions in fatty acid degradation: hydration of 2-enoyl-CoA (trans-2-enoyl-CoA) to produce (3R)-3-hydroxyacyl-CoA, and dehydrogenation of (3R)-3-hydroxyacyl-CoA to produce 3-ketoacyl-CoA (3-oxoacyl-CoA), which is further metabolized by SCPx. Can use straight-chain and branched-chain fatty acids, as well as bile acid intermediates as substrates. The protein is Peroxisomal multifunctional enzyme type 2 of Homo sapiens (Human).